Consider the following 201-residue polypeptide: MIFKYPGGKTYETKQMNKSIRPFQPNYGNRGMTLEEDLNATNEYYREHGIAVIHKKPTPVQIVRVDYPKRSAAVIKEAYFKQASTTDYNGVYRGKYIDFEAKETKNKTSFPLKNFHEHQIHHMQQVLRHGGICFVILRFTTLNEVYLLDANHLIMFWEQQRSGGRKSIPKREIERYGHYIALGYQPRIDYISVVEKVYFSH.

Positions 85, 87, 100, and 119 each coordinate Mg(2+).

Belongs to the RecU family. Mg(2+) serves as cofactor.

It is found in the cytoplasm. It carries out the reaction Endonucleolytic cleavage at a junction such as a reciprocal single-stranded crossover between two homologous DNA duplexes (Holliday junction).. Functionally, endonuclease that resolves Holliday junction intermediates in genetic recombination. Cleaves mobile four-strand junctions by introducing symmetrical nicks in paired strands. Promotes annealing of linear ssDNA with homologous dsDNA. Required for DNA repair, homologous recombination and chromosome segregation. In Geobacillus sp. (strain WCH70), this protein is Holliday junction resolvase RecU.